The sequence spans 603 residues: Glutathione-regulated potassium-efflux system protein KefB (603 aa).

13 consecutive transmembrane segments (helical) span residues 4-24 (SDFLLAGVLFLFAAVAAVPLA), 29-49 (IGAVLGYLLAGIAIGPWGLGF), 55-75 (EILHFSELGVVFLMFIIGLEL), 87-107 (IFGVGAAQVLLSAALLAGLLM), 115-135 (AAVVGGIGLAMSSTAMALQLM), 152-172 (VLLFQDLAVIPALALVPLLAG), 177-197 (HFDWMKIGMKVLAFVGMLIGG), 207-227 (FIAASGVREVFTAATLLLVLG), 230-250 (LFMDALGLSMALGTFIAGVLL), 268-288 (GLLLGLFFISVGMSLNLGVLY), 291-311 (LLWVVISVVVLVAVKILVLYL), 324-344 (MQFAGVLSQGGEFAFVLFSTA), and 355-375 (MALLLVTVTVTLSMMTTPLLM). The RCK N-terminal domain maps to 402 to 521 (KPQVIVVGFG…AGVTQFSRET (120 aa)).

The protein belongs to the monovalent cation:proton antiporter 2 (CPA2) transporter (TC 2.A.37) family. KefB subfamily. As to quaternary structure, interacts with the regulatory subunit KefG.

It is found in the cell inner membrane. In terms of biological role, pore-forming subunit of a potassium efflux system that confers protection against electrophiles. Catalyzes K(+)/H(+) antiport. This Shigella boydii serotype 4 (strain Sb227) protein is Glutathione-regulated potassium-efflux system protein KefB.